A 1248-amino-acid chain; its full sequence is Period circadian protein homolog 2 (1248 aa).

The interval 1 to 57 (MNGYVEFSPSPTKESVEPQPSQAVLQEDVDMSSGSSGHENCSMGRDSQGSDCDDNGK) is disordered. Polar residues-rich tracts occupy residues 9-24 (PSPT…SQAV) and 32-50 (SSGS…SQGS). A Nuclear export signal 1 motif is present at residues 105–114 (LIRTLRELKV). Residues 175–242 (ITSEYIVKNA…FHSYTTPYKL (68 aa)) enclose the PAS 1 domain. Residues 302–306 (LCCLL) carry the LXXLL motif. The PAS 2 domain occupies 315–381 (YEAPRIPPEK…MLAIHKKILQ (67 aa)). The PAC domain maps to 389–432 (YSPIRFRARNGEYITLDTSWSSFINPWSRKISFIIGRHKVRVGP). The short motif at 456–465 (LTEQIHRLLM) is the Nuclear export signal 2 element. Disordered stretches follow at residues 467–563 (PVPH…SLPK) and 619–638 (VSPG…VSSH). The important for protein stability stretch occupies residues 474 to 478 (SGYGS). Positions 506 to 706 (RKSGISKNGS…GAPGGLSQEK (201 aa)) are CSNK1E binding domain. The segment covering 510 to 521 (ISKNGSKTQTRS) has biased composition (polar residues). 4 positions are modified to phosphoserine: Ser-521, Ser-524, Ser-527, and Ser-540. The span at 523-534 (FSHESGEQKEIA) shows a compositional bias: basic and acidic residues. A phosphoserine mark is found at Ser-656, Ser-690, Ser-694, Ser-703, and Ser-755. 2 disordered regions span residues 675-708 (DKKP…EKGP) and 751-829 (RAQA…PSAP). The Nuclear localization signal motif lies at 773-789 (KKTGKNRKLKSKRVKTR). Basic residues predominate over residues 774 to 787 (KTGKNRKLKSKRVK). The span at 816–827 (SPSDTSQSSCPS) shows a compositional bias: low complexity. The segment at 873–1058 (DFAVQPLPLA…DLCSATGSAL (186 aa)) is interaction with PPARG. Position 930 is a phosphoserine (Ser-930). Residues 950-971 (TPPAATVTSGRASPPLFQSRGS) are disordered. The residue at position 955 (Thr-955) is a Phosphothreonine. Ser-962 is subject to Phosphoserine. Positions 974–981 (LQLNLLQL) match the Nuclear export signal 3 motif. Residues 984–1035 (APEGSTGAAGTSGTTGTAAAGLDCTPGTSRDRQPKAPSTCKEPSDTQNSDAL) form a disordered region. Residues 987 to 1004 (GSTGAAGTSGTTGTAAAG) show a composition bias toward low complexity. The LXXLL motif lies at 1042–1046 (LNLLL). Over residues 1057–1080 (ALSGSGASATSDSLGSGSLGCDAS) the composition is skewed to low complexity. The tract at residues 1057–1113 (ALSGSGASATSDSLGSGSLGCDASRSGAGSSDTSHTSKYFGSIDSSENNHKAKVSTD) is disordered. The span at 1083-1102 (GAGSSDTSHTSKYFGSIDSS) shows a compositional bias: polar residues. Basic and acidic residues predominate over residues 1103–1112 (ENNHKAKVST). Ser-1117 carries the phosphoserine modification. Positions 1148 to 1248 (SRDLESVLRE…LTGPRIEAQT (101 aa)) are CRY binding domain. Residues 1215–1248 (PYEEDSPSPGLCDTSEAKEEEGEQLTGPRIEAQT) are disordered.

In terms of assembly, homodimer. Component of the circadian core oscillator, which includes the CRY proteins, CLOCK or NPAS2, BMAL1 or BMAL2, CSNK1D and/or CSNK1E, TIMELESS, and the PER proteins. Interacts with CLOCK-BMAL1 (off DNA). Interacts with BMAL2. Interacts directly with PER1 and PER3, and through a C-terminal domain, with CRY1 and CRY2. Interacts (via PAS 2 domain) with TIMELESS. Interacts with NFIL3. Different large complexes have been identified with different repressive functions. The core of PER complexes is composed of at least PER1, PER2, PER3, CRY1, CRY2, CSNK1D and/or CSNK1E. The large PER complex involved in the repression of transcriptional termination is composed of at least PER2, CDK9, DDX5, DHX9, NCBP1 and POLR2A (active). The large PER complex involved in the histone deacetylation is composed of at least HDAC1, PER2, SFPQ and SIN3A. The large PER complex involved in the histone methylation is composed of at least PER2, CBX3, TRIM28, SUV39H1 and/or SUV39H2; CBX3 mediates the formation of the complex. Interacts with SETX; the interaction inhibits termination of circadian target genes. Interacts with the nuclear receptors HNF4A, NR1D1, NR4A2, RORA, PPARA, PPARG and THRA; the interaction with at least PPARG is ligand dependent. Interacts with PML. Interacts (phosphorylated) with BTRC and FBXW11; the interactions trigger proteasomal degradation. Interacts with NONO and SFPQ. Interacts with PRKCDBP. Interacts with MAGEL2. Interacts with MAP1LC3B. Interacts with HNF4A. In terms of processing, acetylated. Deacetylated by SIRT1, resulting in decreased protein stability. Deacetylated by SIRT6, preventing its degradation by the proteasome, resulting in increased protein stability. Post-translationally, phosphorylated by CSNK1E and CSNK1D. Phosphorylation results in PER2 protein degradation. May be dephosphorylated by PP1. Ubiquitinated, leading to its proteasomal degradation. Ubiquitination may be inhibited by CRY1. Expressed in the brain, mainly in the suprachiasmatic nucleus (SCN). Expression also found in the harderian gland, lung, eye, intestine, liver and skeletal muscle.

The protein resides in the nucleus. Its subcellular location is the cytoplasm. It is found in the perinuclear region. In terms of biological role, transcriptional repressor which forms a core component of the circadian clock. The circadian clock, an internal time-keeping system, regulates various physiological processes through the generation of approximately 24 hour circadian rhythms in gene expression, which are translated into rhythms in metabolism and behavior. It is derived from the Latin roots 'circa' (about) and 'diem' (day) and acts as an important regulator of a wide array of physiological functions including metabolism, sleep, body temperature, blood pressure, endocrine, immune, cardiovascular, and renal function. Consists of two major components: the central clock, residing in the suprachiasmatic nucleus (SCN) of the brain, and the peripheral clocks that are present in nearly every tissue and organ system. Both the central and peripheral clocks can be reset by environmental cues, also known as Zeitgebers (German for 'timegivers'). The predominant Zeitgeber for the central clock is light, which is sensed by retina and signals directly to the SCN. The central clock entrains the peripheral clocks through neuronal and hormonal signals, body temperature and feeding-related cues, aligning all clocks with the external light/dark cycle. Circadian rhythms allow an organism to achieve temporal homeostasis with its environment at the molecular level by regulating gene expression to create a peak of protein expression once every 24 hours to control when a particular physiological process is most active with respect to the solar day. Transcription and translation of core clock components (CLOCK, NPAS2, BMAL1, BMAL2, PER1, PER2, PER3, CRY1 and CRY2) plays a critical role in rhythm generation, whereas delays imposed by post-translational modifications (PTMs) are important for determining the period (tau) of the rhythms (tau refers to the period of a rhythm and is the length, in time, of one complete cycle). A diurnal rhythm is synchronized with the day/night cycle, while the ultradian and infradian rhythms have a period shorter and longer than 24 hours, respectively. Disruptions in the circadian rhythms contribute to the pathology of cardiovascular diseases, cancer, metabolic syndrome and aging. A transcription/translation feedback loop (TTFL) forms the core of the molecular circadian clock mechanism. Transcription factors, CLOCK or NPAS2 and BMAL1 or BMAL2, form the positive limb of the feedback loop, act in the form of a heterodimer and activate the transcription of core clock genes and clock-controlled genes (involved in key metabolic processes), harboring E-box elements (5'-CACGTG-3') within their promoters. The core clock genes: PER1/2/3 and CRY1/2 which are transcriptional repressors form the negative limb of the feedback loop and interact with the CLOCK|NPAS2-BMAL1|BMAL2 heterodimer inhibiting its activity and thereby negatively regulating their own expression. This heterodimer also activates nuclear receptors NR1D1/2 and RORA/B/G, which form a second feedback loop and which activate and repress BMAL1 transcription, respectively. PER1 and PER2 proteins transport CRY1 and CRY2 into the nucleus with appropriate circadian timing, but also contribute directly to repression of clock-controlled target genes through interaction with several classes of RNA-binding proteins, helicases and others transcriptional repressors. PER appears to regulate circadian control of transcription by at least three different modes. First, interacts directly with the CLOCK-BMAL1 at the tail end of the nascent transcript peak to recruit complexes containing the SIN3-HDAC that remodel chromatin to repress transcription. Second, brings H3K9 methyltransferases such as SUV39H1 and SUV39H2 to the E-box elements of the circadian target genes, like PER2 itself or PER1. The recruitment of each repressive modifier to the DNA seems to be very precisely temporally orchestrated by the large PER complex, the deacetylases acting before than the methyltransferases. Additionally, large PER complexes are also recruited to the target genes 3' termination site through interactions with RNA-binding proteins and helicases that may play a role in transcription termination to regulate transcription independently of CLOCK-BMAL1 interactions. Recruitment of large PER complexes to the elongating polymerase at PER and CRY termination sites inhibited SETX action, impeding RNA polymerase II release and thereby repressing transcriptional reinitiation. May propagate clock information to metabolic pathways via the interaction with nuclear receptors. Coactivator of PPARA and corepressor of NR1D1, binds rhythmically at the promoter of nuclear receptors target genes like BMAL1 or G6PC1. Directly and specifically represses PPARG proadipogenic activity by blocking PPARG recruitment to target promoters and thereby transcriptional activation. Required for fatty acid and lipid metabolism, is involved as well in the regulation of circulating insulin levels. Plays an important role in the maintenance of cardiovascular functions through the regulation of NO and vasodilatatory prostaglandins production in aortas. Controls circadian glutamate uptake in synaptic vesicles through the regulation of VGLUT1 expression. May also be involved in the regulation of inflammatory processes. Represses the CLOCK-BMAL1 induced transcription of BHLHE40/DEC1 and ATF4. Negatively regulates the formation of the TIMELESS-CRY1 complex by competing with TIMELESS for binding to CRY1. The sequence is that of Period circadian protein homolog 2 (PER2) from Spalax judaei (Judean Mountains blind mole rat).